The sequence spans 355 residues: 45 kDa calcium-binding protein (355 aa).

A signal peptide spans 1-29; the sequence is MASRQGPLCGLAPCCLWLLGVILLMNASA. Residue Asn26 is glycosylated (N-linked (GlcNAc...) asparagine). EF-hand domains lie at 91–126 and 130–165; these read KSRR…KTAE and EAVA…TKGH. Ser92 carries the phosphoserine modification. The Ca(2+) site is built by Asp104, Asn106, Asp108, Arg110, Glu115, Asp143, Asp145, Asp147, His149, and Glu154. Phosphothreonine occurs at positions 186 and 210. EF-hand domains lie at 226 to 261, 271 to 306, and 307 to 342; these read MLQF…TVEN, WVRD…MNEF, and SALN…FTGS. The Ca(2+) site is built by Asp239, Asp241, Asp243, Lys245, and Glu250. A Phosphothreonine modification is found at Thr258. The Ca(2+) site is built by Asp284, Asn286, and Asp288. Phosphothreonine is present on Thr292. Residues Glu295, Asp320, Asn322, Asn324, Tyr326, and Glu331 each contribute to the Ca(2+) site. A necessary for intracellular retention in Golgi apparatus lumen region spans residues 302–355; the sequence is PMNEFSALNEAKQMIAIADENQNHYLEPEEVLKYSEFFTGSKLVDYARSVHEEF.

The protein belongs to the CREC family.

The protein localises to the golgi apparatus lumen. In terms of biological role, may regulate calcium-dependent activities in the endoplasmic reticulum lumen or post-ER compartment. In Capra hircus (Goat), this protein is 45 kDa calcium-binding protein (SDF4).